We begin with the raw amino-acid sequence, 353 residues long: Photosystem II D2 protein (353 aa).

A helical transmembrane segment spans residues 41–61; it reads TAYLALGGWLTGTTFVTSWYT. Histidine 118 serves as a coordination point for chlorophyll a. The chain crosses the membrane as a helical span at residues 125-141; that stretch reads GFMLRQFEISRLVGIRP. 2 residues coordinate pheophytin a: glutamine 130 and asparagine 143. A helical membrane pass occupies residues 153–166; the sequence is VFVSVFLMYPLGQS. Histidine 198 is a chlorophyll a binding site. Residues 208–228 traverse the membrane as a helical segment; sequence GALLCAIHGATVENTLYEDGE. Histidine 215 and phenylalanine 262 together coordinate a plastoquinone. Histidine 215 provides a ligand contact to Fe cation. Residue histidine 269 coordinates Fe cation. Residues 279 to 295 traverse the membrane as a helical segment; sequence GLWTSSIGIIGLALNLR.

It belongs to the reaction center PufL/M/PsbA/D family. As to quaternary structure, PSII is composed of 1 copy each of membrane proteins PsbA, PsbB, PsbC, PsbD, PsbE, PsbF, PsbH, PsbI, PsbJ, PsbK, PsbL, PsbM, PsbT, PsbX, PsbY, PsbZ, Psb30/Ycf12, peripheral proteins PsbO, CyanoQ (PsbQ), PsbU, PsbV and a large number of cofactors. It forms dimeric complexes. The D1/D2 heterodimer binds P680, chlorophylls that are the primary electron donor of PSII, and subsequent electron acceptors. It shares a non-heme iron and each subunit binds pheophytin, quinone, additional chlorophylls, carotenoids and lipids. There is also a Cl(-1) ion associated with D1 and D2, which is required for oxygen evolution. The PSII complex binds additional chlorophylls, carotenoids and specific lipids. is required as a cofactor.

The protein localises to the host cellular thylakoid membrane. It catalyses the reaction 2 a plastoquinone + 4 hnu + 2 H2O = 2 a plastoquinol + O2. Functionally, photosystem II (PSII) is a light-driven water:plastoquinone oxidoreductase that uses light energy to abstract electrons from H(2)O, generating O(2) and a proton gradient subsequently used for ATP formation. It consists of a core antenna complex that captures photons, and an electron transfer chain that converts photonic excitation into a charge separation. The D1/D2 (PsbA/PsbD) reaction center heterodimer binds P680, the primary electron donor of PSII as well as several subsequent electron acceptors. D2 is needed for assembly of a stable PSII complex. The protein is Photosystem II D2 protein (psbD) of Synechococcus phage S-PM2.